Consider the following 202-residue polypeptide: Pyridoxal 5'-phosphate synthase subunit PdxT (202 aa).

Residue 52–54 (GES) coordinates L-glutamine. Residue C84 is the Nucleophile of the active site. L-glutamine-binding positions include R116 and 143 to 144 (IR). Residues H184 and E186 each act as charge relay system in the active site.

This sequence belongs to the glutaminase PdxT/SNO family. In terms of assembly, in the presence of PdxS, forms a dodecamer of heterodimers. Only shows activity in the heterodimer.

It catalyses the reaction aldehydo-D-ribose 5-phosphate + D-glyceraldehyde 3-phosphate + L-glutamine = pyridoxal 5'-phosphate + L-glutamate + phosphate + 3 H2O + H(+). The catalysed reaction is L-glutamine + H2O = L-glutamate + NH4(+). It functions in the pathway cofactor biosynthesis; pyridoxal 5'-phosphate biosynthesis. Catalyzes the hydrolysis of glutamine to glutamate and ammonia as part of the biosynthesis of pyridoxal 5'-phosphate. The resulting ammonia molecule is channeled to the active site of PdxS. In Pyrobaculum neutrophilum (strain DSM 2338 / JCM 9278 / NBRC 100436 / V24Sta) (Thermoproteus neutrophilus), this protein is Pyridoxal 5'-phosphate synthase subunit PdxT.